We begin with the raw amino-acid sequence, 670 residues long: DNA ligase (670 aa).

Residues 32-36 (DAEYD), 81-82 (SL), and E113 each bind NAD(+). K115 (N6-AMP-lysine intermediate) is an active-site residue. The NAD(+) site is built by R136, E173, K290, and K314. Zn(2+) is bound by residues C408, C411, C426, and C432. The BRCT domain occupies 592-670 (EIDSPFAGKT…EAEMIRLLGE (79 aa)).

It belongs to the NAD-dependent DNA ligase family. LigA subfamily. Requires Mg(2+) as cofactor. The cofactor is Mn(2+).

The catalysed reaction is NAD(+) + (deoxyribonucleotide)n-3'-hydroxyl + 5'-phospho-(deoxyribonucleotide)m = (deoxyribonucleotide)n+m + AMP + beta-nicotinamide D-nucleotide.. Its function is as follows. DNA ligase that catalyzes the formation of phosphodiester linkages between 5'-phosphoryl and 3'-hydroxyl groups in double-stranded DNA using NAD as a coenzyme and as the energy source for the reaction. It is essential for DNA replication and repair of damaged DNA. The polypeptide is DNA ligase (Yersinia pseudotuberculosis serotype O:1b (strain IP 31758)).